Consider the following 138-residue polypeptide: Basic phospholipase A2 homolog 7 (138 aa).

The signal sequence occupies residues 1-16 (MRTLWLMAVLLVGVEG). 6 disulfides stabilise this stretch: cysteine 42-cysteine 131, cysteine 44-cysteine 60, cysteine 59-cysteine 111, cysteine 65-cysteine 138, cysteine 66-cysteine 104, and cysteine 91-cysteine 102. An important for membrane-damaging activities in eukaryotes and bacteria; heparin-binding region spans residues 121 to 133 (KKKKINLKLFCKK).

This sequence belongs to the phospholipase A2 family. Group II subfamily. K49 sub-subfamily. As to expression, expressed by the venom gland.

The protein localises to the secreted. In terms of biological role, snake venom phospholipase A2 homolog that lacks enzymatic activity. Is myotoxic and displays edema-inducing activities. A model of myotoxic mechanism has been proposed: an apo Lys49-PLA2 is activated by the entrance of a hydrophobic molecule (e.g. fatty acid) at the hydrophobic channel of the protein leading to a reorientation of a monomer. This reorientation causes a transition between 'inactive' to 'active' states, causing alignment of C-terminal and membrane-docking sites (MDoS) side-by-side and putting the membrane-disruption sites (MDiS) in the same plane, exposed to solvent and in a symmetric position for both monomers. The MDoS region stabilizes the toxin on membrane by the interaction of charged residues with phospholipid head groups. Subsequently, the MDiS region destabilizes the membrane with penetration of hydrophobic residues. This insertion causes a disorganization of the membrane, allowing an uncontrolled influx of ions (i.e. calcium and sodium), and eventually triggering irreversible intracellular alterations and cell death. This is Basic phospholipase A2 homolog 7 from Craspedocephalus gramineus (Bamboo pit viper).